Reading from the N-terminus, the 152-residue chain is SsrA-binding protein (152 aa).

This sequence belongs to the SmpB family.

It is found in the cytoplasm. In terms of biological role, required for rescue of stalled ribosomes mediated by trans-translation. Binds to transfer-messenger RNA (tmRNA), required for stable association of tmRNA with ribosomes. tmRNA and SmpB together mimic tRNA shape, replacing the anticodon stem-loop with SmpB. tmRNA is encoded by the ssrA gene; the 2 termini fold to resemble tRNA(Ala) and it encodes a 'tag peptide', a short internal open reading frame. During trans-translation Ala-aminoacylated tmRNA acts like a tRNA, entering the A-site of stalled ribosomes, displacing the stalled mRNA. The ribosome then switches to translate the ORF on the tmRNA; the nascent peptide is terminated with the 'tag peptide' encoded by the tmRNA and targeted for degradation. The ribosome is freed to recommence translation, which seems to be the essential function of trans-translation. This is SsrA-binding protein from Helicobacter pylori (strain J99 / ATCC 700824) (Campylobacter pylori J99).